We begin with the raw amino-acid sequence, 266 residues long: Early E1A protein (266 aa).

An interaction with RB1 in competition with E2F1 region spans residues 39 to 47; it reads MSLHEMYDL. A PXLXP motif, interaction with host ZMYND11 motif is present at residues 94 to 98; sequence PELQP. The LXCXE motif, interaction with host RB1 signature appears at 103-107; that stretch reads LFCYE. A zinc finger lies at 160–180; the sequence is CSSCDYHRKTSGCPEILCSLC. A disordered region spans residues 193 to 244; the sequence is VSDSEPDEPDSTTADSNHGSPPTLRCTPPRDLPRPVPVKASPGKRPAVNSLH. Positions 203-212 are enriched in polar residues; sequence STTADSNHGS. Positions 255 to 259 match the PXDLS motif, CTBP-binding motif; it reads PLDLS. A Nuclear localization signal motif is present at residues 261 to 265; that stretch reads KRSRS.

Belongs to the adenoviridae E1A protein family. As to quaternary structure, interacts with host UBE2I; this interaction interferes with polySUMOylation. Interacts with host RB1; this interaction induces the aberrant dissociation of RB1-E2F1 complex thereby disrupting the activity of RB1 and activating E2F1-regulated genes. Interacts with host ATF7; the interaction enhances ATF7-mediated viral transactivation activity which requires the zinc binding domains of both proteins. Isoform early E1A 32 kDa protein and isoform early E1A 26 kDa protein interact (via N-terminus) with CUL1 and E3 ubiquitin ligase RBX1; these interactions inhibit RBX1-CUL1-dependent elongation reaction of ubiquitin chains and attenuate ubiquitination of SCF(FBXW7) target proteins. Interacts (via PXLXP motif) with host ZMYND11/BS69 (via MYND-type zinc finger); this interaction inhibits E1A mediated transactivation. Interacts with host EP300; this interaction stimulates the acetylation of RB1 by recruiting EP300 and RB1 into a multimeric-protein complex. Interacts with host CTBP1 and CTBP2; this interaction seems to potentiate viral replication. Interacts with host DCAF7. Interacts with host DYRK1A. Interacts with host KPNA4; this interaction allows E1A import into the host nucleus. Interacts with host EP400; this interaction stabilizes MYC. Interacts with host TBP protein; this interaction probably disrupts the TBP-TATA complex.

It is found in the host nucleus. Functionally, plays a role in viral genome replication by driving entry of quiescent cells into the cell cycle. Stimulation of progression from G1 to S phase allows the virus to efficiently use the cellular DNA replicating machinery to achieve viral genome replication. E1A protein has both transforming and trans-activating activities. Induces the disassembly of the E2F1 transcription factor from RB1 by direct competition for the same binding site on RB1, with subsequent transcriptional activation of E2F1-regulated S-phase genes and of the E2 region of the adenoviral genome. Release of E2F1 leads to the ARF-mediated inhibition of MDM2 and causes TP53/p53 to accumulate because it is not targeted for degradation by MDM2-mediated ubiquitination anymore. This increase in TP53, in turn, would arrest the cell proliferation and direct its death but this effect is counteracted by the viral protein E1B-55K. Inactivation of the ability of RB1 to arrest the cell cycle is critical for cellular transformation, uncontrolled cellular growth and proliferation induced by viral infection. Interaction with RBX1 and CUL1 inhibits ubiquitination of the proteins targeted by SCF(FBXW7) ubiquitin ligase complex, and may be linked to unregulated host cell proliferation. The tumorigenesis-restraining activity of E1A may be related to the disruption of the host CtBP-CtIP complex through the CtBP binding motif. This chain is Early E1A protein, found in Simian adenovirus serotype 7 (SAdV-7).